The following is a 128-amino-acid chain: Aspartate 1-decarboxylase (128 aa).

S25 serves as the catalytic Schiff-base intermediate with substrate; via pyruvic acid. S25 bears the Pyruvic acid (Ser) mark. Residue T57 coordinates substrate. Y58 (proton donor) is an active-site residue. 73–75 (GAA) lines the substrate pocket.

The protein belongs to the PanD family. In terms of assembly, heterooctamer of four alpha and four beta subunits. Pyruvate serves as cofactor. In terms of processing, is synthesized initially as an inactive proenzyme, which is activated by self-cleavage at a specific serine bond to produce a beta-subunit with a hydroxyl group at its C-terminus and an alpha-subunit with a pyruvoyl group at its N-terminus.

The protein resides in the cytoplasm. The catalysed reaction is L-aspartate + H(+) = beta-alanine + CO2. It participates in cofactor biosynthesis; (R)-pantothenate biosynthesis; beta-alanine from L-aspartate: step 1/1. Catalyzes the pyruvoyl-dependent decarboxylation of aspartate to produce beta-alanine. The chain is Aspartate 1-decarboxylase from Chlorobium phaeovibrioides (strain DSM 265 / 1930) (Prosthecochloris vibrioformis (strain DSM 265)).